The primary structure comprises 214 residues: MVIDKSIPKATAKRLSLYYRIFKRFHADQVEKASSKQIADAMGIDSATVRRDFSYFGELGRRGFGYDVTKLMNFFADLLNDHSTTNVILVGCGNIGRALLHYRFHDRNKMQIAMGFDTDDNALVGTKTADNIPVHGISSVKERIANTDIETAILTVPSIHAQEVTDQLIEAGIKGILSFAPVHLQVPKGVIVQSVDLTSELQTLLYFMNQNHLD.

The segment at residues 17–56 is a DNA-binding region (H-T-H motif); the sequence is LYYRIFKRFHADQVEKASSKQIADAMGIDSATVRRDFSYF. Residue 91-96 coordinates NAD(+); that stretch reads GCGNIG.

Belongs to the transcriptional regulatory Rex family. As to quaternary structure, homodimer.

It localises to the cytoplasm. Its function is as follows. Modulates transcription in response to changes in cellular NADH/NAD(+) redox state. This is Redox-sensing transcriptional repressor Rex from Streptococcus pyogenes serotype M1.